The chain runs to 435 residues: Adenylosuccinate synthetase (435 aa).

Residues G12 to K18 and G40 to T42 contribute to the GTP site. D13 (proton acceptor) is an active-site residue. Mg(2+) contacts are provided by D13 and G40. Residues D13–K16, N38–H41, T130, R144, Q224, T239, and R301 each bind IMP. Residue H41 is the Proton donor of the active site. T297 to R303 serves as a coordination point for substrate. Residues R303, K329–D331, and S411–G413 contribute to the GTP site.

The protein belongs to the adenylosuccinate synthetase family. Homodimer. The cofactor is Mg(2+).

Its subcellular location is the cytoplasm. The catalysed reaction is IMP + L-aspartate + GTP = N(6)-(1,2-dicarboxyethyl)-AMP + GDP + phosphate + 2 H(+). The protein operates within purine metabolism; AMP biosynthesis via de novo pathway; AMP from IMP: step 1/2. Plays an important role in the de novo pathway of purine nucleotide biosynthesis. Catalyzes the first committed step in the biosynthesis of AMP from IMP. This Wolbachia sp. subsp. Brugia malayi (strain TRS) protein is Adenylosuccinate synthetase.